The chain runs to 160 residues: Cytochrome b6-f complex subunit 4 (160 aa).

The next 3 membrane-spanning stretches (helical) occupy residues 36-56, 95-115, and 131-151; these read LLYVFPVVILGTIGLVTALAV, LLGIACQAAIPLGLMLVPFIE, and AVFLFGTVVTLWLGAGATFPI.

The protein belongs to the cytochrome b family. PetD subfamily. The 4 large subunits of the cytochrome b6-f complex are cytochrome b6, subunit IV (17 kDa polypeptide, PetD), cytochrome f and the Rieske protein, while the 4 small subunits are PetG, PetL, PetM and PetN. The complex functions as a dimer.

The protein localises to the cellular thylakoid membrane. In terms of biological role, component of the cytochrome b6-f complex, which mediates electron transfer between photosystem II (PSII) and photosystem I (PSI), cyclic electron flow around PSI, and state transitions. In Rippkaea orientalis (strain PCC 8801 / RF-1) (Cyanothece sp. (strain PCC 8801)), this protein is Cytochrome b6-f complex subunit 4.